The primary structure comprises 520 residues: Erythritol kinase (520 aa).

The protein belongs to the FGGY kinase family.

It catalyses the reaction erythritol + ATP = D-erythritol 1-phosphate + ADP + H(+). The protein operates within carbohydrate metabolism; erythritol degradation. Functionally, catalyzes the phosphorylation of erythritol to D-erythritol-1-phosphate. In Brucella abortus (strain 2308), this protein is Erythritol kinase.